The chain runs to 285 residues: Putative quercetin 2,3-dioxygenase PA3240 (285 aa).

A divalent metal cation-binding residues include His60, His62, His104, and Glu106.

The protein belongs to the pirin family. It depends on a divalent metal cation as a cofactor.

The enzyme catalyses quercetin + O2 = 2-(3,4-dihydroxybenzoyloxy)-4,6-dihydroxybenzoate + CO. It functions in the pathway flavonoid metabolism; quercetin degradation. Functionally, putative quercetin 2,3-dioxygenase. In Pseudomonas aeruginosa (strain ATCC 15692 / DSM 22644 / CIP 104116 / JCM 14847 / LMG 12228 / 1C / PRS 101 / PAO1), this protein is Putative quercetin 2,3-dioxygenase PA3240.